Here is a 347-residue protein sequence, read N- to C-terminus: Geranylgeranyl pyrophosphate synthase 7, chloroplastic (347 aa).

Residues 1–39 (MTTLNLSIFPSVKISSSASIPGFIKIQPFLLRRKLSTVL) constitute a chloroplast transit peptide. Isopentenyl diphosphate contacts are provided by K95, R98, and H127. Mg(2+) is bound by residues D134 and D140. R145 contacts dimethylallyl diphosphate. R146 contacts isopentenyl diphosphate. Dimethylallyl diphosphate-binding residues include K232, T233, Q270, K287, and K297.

The protein belongs to the FPP/GGPP synthase family. In terms of assembly, monomer. It depends on Mg(2+) as a cofactor.

The protein localises to the plastid. The protein resides in the chloroplast. The enzyme catalyses isopentenyl diphosphate + dimethylallyl diphosphate = (2E)-geranyl diphosphate + diphosphate. It carries out the reaction isopentenyl diphosphate + (2E)-geranyl diphosphate = (2E,6E)-farnesyl diphosphate + diphosphate. It catalyses the reaction isopentenyl diphosphate + (2E,6E)-farnesyl diphosphate = (2E,6E,10E)-geranylgeranyl diphosphate + diphosphate. It functions in the pathway isoprenoid biosynthesis; farnesyl diphosphate biosynthesis; farnesyl diphosphate from geranyl diphosphate and isopentenyl diphosphate: step 1/1. The protein operates within isoprenoid biosynthesis; geranyl diphosphate biosynthesis; geranyl diphosphate from dimethylallyl diphosphate and isopentenyl diphosphate: step 1/1. It participates in isoprenoid biosynthesis; geranylgeranyl diphosphate biosynthesis; geranylgeranyl diphosphate from farnesyl diphosphate and isopentenyl diphosphate: step 1/1. Functionally, catalyzes the trans-addition of the three molecules of IPP onto DMAPP to form geranylgeranyl pyrophosphate. The polypeptide is Geranylgeranyl pyrophosphate synthase 7, chloroplastic (Arabidopsis thaliana (Mouse-ear cress)).